The sequence spans 136 residues: Peptide methionine sulfoxide reductase MsrB (136 aa).

Positions 13 to 135 (ENDWRSKLTP…NSASLDFKDK (123 aa)) constitute a MsrB domain. Zn(2+) is bound by residues Cys52, Cys55, Cys101, and Cys104. The active-site Nucleophile is Cys124.

This sequence belongs to the MsrB Met sulfoxide reductase family. Zn(2+) serves as cofactor.

The enzyme catalyses L-methionyl-[protein] + [thioredoxin]-disulfide + H2O = L-methionyl-(R)-S-oxide-[protein] + [thioredoxin]-dithiol. This is Peptide methionine sulfoxide reductase MsrB from Synechococcus sp. (strain RCC307).